A 76-amino-acid polypeptide reads, in one-letter code: Large ribosomal subunit protein uL29 (76 aa).

The protein belongs to the universal ribosomal protein uL29 family.

The chain is Large ribosomal subunit protein uL29 from Corynebacterium diphtheriae (strain ATCC 700971 / NCTC 13129 / Biotype gravis).